The primary structure comprises 476 residues: MADASHDTQVSGHLTAIHGSVVDVRFPQGVLPALNEGIVIDRDEPTPVLAEVQQHLDPVTIRAVALGNTAGLSRGVSARALGTPIQTPVGDAVLGRLLNAVGKPADRGPELPPSTVFRPIHASAPALNRLGASQEIFHTGIKVIDLLAPLVKGGKAAMFGGAGVGKTVLIMELIRTTVERYSGISVFAGIGERSREGHELLLELKQSGVLPRTALVFGQMNEPPGARWRAGLTALTIAEHFRDVQHENVLLLIDNVYRLVQAGGEVSGLLGRLPSRVGYQPTLASEIAELQERIASVAGAAITSIQAVYVPADDFTDPAVAEIFSHLDSSIVLSRQMASEAMYPAVDPLASSSTLLDARLVGEGHYRTAQEVRKTIAHYRDLQEIIALLGIEELSAIDRQAVKRARRLMRFLTQPFMVTVAFTGKEGRTVEVADTLAGCRAILDGEADNWAESSLYMIGVLEEARERERASAKAMS.

An ATP-binding site is contributed by G160–T167.

Belongs to the ATPase alpha/beta chains family. In terms of assembly, F-type ATPases have 2 components, CF(1) - the catalytic core - and CF(0) - the membrane proton channel. CF(1) has five subunits: alpha(3), beta(3), gamma(1), delta(1), epsilon(1). CF(0) has four main subunits: a(1), b(1), b'(1) and c(9-12).

It localises to the cell inner membrane. The enzyme catalyses ATP + H2O + 4 H(+)(in) = ADP + phosphate + 5 H(+)(out). In terms of biological role, produces ATP from ADP in the presence of a proton gradient across the membrane. The catalytic sites are hosted primarily by the beta subunits. The sequence is that of ATP synthase subunit beta 2 from Bradyrhizobium sp. (strain BTAi1 / ATCC BAA-1182).